Here is a 420-residue protein sequence, read N- to C-terminus: UDP-N-acetylglucosamine 1-carboxyvinyltransferase (420 aa).

Position 22–23 (22–23) interacts with phosphoenolpyruvate; it reads KN. Arg92 contacts UDP-N-acetyl-alpha-D-glucosamine. Residue Cys116 is the Proton donor of the active site. Cys116 carries the 2-(S-cysteinyl)pyruvic acid O-phosphothioketal modification. 2 residues coordinate UDP-N-acetyl-alpha-D-glucosamine: Asp306 and Ile328.

The protein belongs to the EPSP synthase family. MurA subfamily.

It is found in the cytoplasm. It carries out the reaction phosphoenolpyruvate + UDP-N-acetyl-alpha-D-glucosamine = UDP-N-acetyl-3-O-(1-carboxyvinyl)-alpha-D-glucosamine + phosphate. It participates in cell wall biogenesis; peptidoglycan biosynthesis. Cell wall formation. Adds enolpyruvyl to UDP-N-acetylglucosamine. This Blochmanniella floridana protein is UDP-N-acetylglucosamine 1-carboxyvinyltransferase.